The following is a 264-amino-acid chain: Sororin (264 aa).

A disordered region spans residues 1-45; the sequence is MAERRTRSGGAAQRSGPRTSLTKPSKSSKRKSGSDLPNSFSEIWP. Ser20, Ser32, Ser34, Ser78, and Ser82 each carry phosphoserine. The KEN box signature appears at 87 to 89; that stretch reads KEN. Thr97 carries the phosphothreonine modification. Residue Ser106 is modified to Phosphoserine. 3 positions are modified to phosphothreonine: Thr110, Thr114, and Thr159. The short motif at 166–168 is the FGF motif element; the sequence is FGF. Ser222 bears the Phosphoserine mark. The interval 242–264 is C-terminal Sororin domain; sequence LDKWAVAMNAEFEAAEQFELLIE.

It belongs to the sororin family. As to quaternary structure, interacts with the APC/C complex. Interacts with the chromatin-bound cohesin complex; the interaction is indirect, occurs after DNA replication and requires acetylation of the cohesin component SMC3. Interacts (via the FGF motif) with PDS5A and PDS5B; the interaction is direct and prevents the interaction of PDS5A with WAPL. Post-translationally, phosphorylated. Phosphorylation, as cells enter mitosis, disrupts the interaction with PDS5A and relieves the inhibition of WAPL by CDCA5. Ubiquitinated by the APC/C complex in G1, leading to its degradation.

The protein resides in the nucleus. Its subcellular location is the chromosome. It is found in the cytoplasm. Its function is as follows. Regulator of sister chromatid cohesion in mitosis stabilizing cohesin complex association with chromatin. May antagonize the action of WAPL which stimulates cohesin dissociation from chromatin. Cohesion ensures that chromosome partitioning is accurate in both meiotic and mitotic cells and plays an important role in DNA repair. Required for efficient DNA double-stranded break repair. The sequence is that of Sororin (Cdca5) from Mus musculus (Mouse).